A 163-amino-acid chain; its full sequence is uncharacterized protein (163 aa).

This is an uncharacterized protein from Drosophila melanogaster (Fruit fly).